The chain runs to 732 residues: Catalase-peroxidase (732 aa).

The tract at residues 1-23 (MSEQSKCPVTGRTAGHPVAGGGM) is disordered. Positions 97-220 (WHSAGTYRTS…LAAVQMGLIY (124 aa)) form a cross-link, tryptophyl-tyrosyl-methioninium (Trp-Tyr) (with M-246). Histidine 98 functions as the Proton acceptor in the catalytic mechanism. The segment at residues 220–246 (YVNPEGPDGNPDPVAAGRDIRETFARM) is a cross-link (tryptophyl-tyrosyl-methioninium (Tyr-Met) (with W-97)). Heme b is bound at residue histidine 261.

Belongs to the peroxidase family. Peroxidase/catalase subfamily. As to quaternary structure, homodimer or homotetramer. Requires heme b as cofactor. Formation of the three residue Trp-Tyr-Met cross-link is important for the catalase, but not the peroxidase activity of the enzyme.

The enzyme catalyses H2O2 + AH2 = A + 2 H2O. It catalyses the reaction 2 H2O2 = O2 + 2 H2O. Functionally, bifunctional enzyme with both catalase and broad-spectrum peroxidase activity. This chain is Catalase-peroxidase, found in Chlorobium limicola (strain DSM 245 / NBRC 103803 / 6330).